The primary structure comprises 319 residues: Vomeronasal type-1 receptor 96 (319 aa).

Residues methionine 1–serine 19 are Extracellular-facing. A helical transmembrane segment spans residues glutamate 20–phenylalanine 40. Residues glutamate 41–aspartate 49 are Cytoplasmic-facing. The helical transmembrane segment at leucine 50–alanine 70 threads the bilayer. Over alanine 71–arginine 93 the chain is Extracellular. A disulfide bridge connects residues cysteine 85 and cysteine 172. The chain crosses the membrane as a helical span at residues leucine 94–leucine 114. Residues serine 115–cysteine 134 are Cytoplasmic-facing. Residues alanine 135–isoleucine 155 form a helical membrane-spanning segment. The Extracellular portion of the chain corresponds to alanine 156–glutamate 193. The N-linked (GlcNAc...) asparagine glycan is linked to asparagine 159. A helical membrane pass occupies residues alanine 194–histidine 214. Residues lysine 215 to arginine 238 are Cytoplasmic-facing. Residues threonine 239–glutamine 259 form a helical membrane-spanning segment. Residues serine 260 to methionine 269 are Extracellular-facing. Residues phenylalanine 270–isoleucine 290 form a helical membrane-spanning segment. The Cytoplasmic portion of the chain corresponds to phenylalanine 291–proline 319.

It belongs to the G-protein coupled receptor 1 family.

The protein resides in the cell membrane. Putative pheromone receptor implicated in the regulation of social as well as reproductive behavior. This Rattus norvegicus (Rat) protein is Vomeronasal type-1 receptor 96 (Vom1r96).